A 388-amino-acid polypeptide reads, in one-letter code: Succinate--CoA ligase [ADP-forming] subunit beta (388 aa).

The 228-residue stretch at 9–236 (KKLFAEHGVP…VAAVDPLEQK (228 aa)) folds into the ATP-grasp domain. ATP contacts are provided by residues Lys-45, 52–54 (GRG), Glu-91, Ser-94, and Glu-99. 2 residues coordinate Mg(2+): Asn-191 and Asp-205. Residues Asn-256 and 318–320 (GIT) contribute to the substrate site.

The protein belongs to the succinate/malate CoA ligase beta subunit family. In terms of assembly, heterotetramer of two alpha and two beta subunits. The cofactor is Mg(2+).

It catalyses the reaction succinate + ATP + CoA = succinyl-CoA + ADP + phosphate. The enzyme catalyses GTP + succinate + CoA = succinyl-CoA + GDP + phosphate. It functions in the pathway carbohydrate metabolism; tricarboxylic acid cycle; succinate from succinyl-CoA (ligase route): step 1/1. Its function is as follows. Succinyl-CoA synthetase functions in the citric acid cycle (TCA), coupling the hydrolysis of succinyl-CoA to the synthesis of either ATP or GTP and thus represents the only step of substrate-level phosphorylation in the TCA. The beta subunit provides nucleotide specificity of the enzyme and binds the substrate succinate, while the binding sites for coenzyme A and phosphate are found in the alpha subunit. This Frankia casuarinae (strain DSM 45818 / CECT 9043 / HFP020203 / CcI3) protein is Succinate--CoA ligase [ADP-forming] subunit beta.